We begin with the raw amino-acid sequence, 158 residues long: Transcription elongation factor GreA (158 aa).

The protein belongs to the GreA/GreB family.

Functionally, necessary for efficient RNA polymerase transcription elongation past template-encoded arresting sites. The arresting sites in DNA have the property of trapping a certain fraction of elongating RNA polymerases that pass through, resulting in locked ternary complexes. Cleavage of the nascent transcript by cleavage factors such as GreA or GreB allows the resumption of elongation from the new 3'terminus. GreA releases sequences of 2 to 3 nucleotides. The polypeptide is Transcription elongation factor GreA (Rhizobium etli (strain ATCC 51251 / DSM 11541 / JCM 21823 / NBRC 15573 / CFN 42)).